An 87-amino-acid chain; its full sequence is Small ribosomal subunit protein uS17 (87 aa).

This sequence belongs to the universal ribosomal protein uS17 family. As to quaternary structure, part of the 30S ribosomal subunit.

In terms of biological role, one of the primary rRNA binding proteins, it binds specifically to the 5'-end of 16S ribosomal RNA. The sequence is that of Small ribosomal subunit protein uS17 from Endomicrobium trichonymphae.